We begin with the raw amino-acid sequence, 141 residues long: Nucleoside diphosphate kinase (141 aa).

The ATP site is built by Lys11, Phe59, Arg87, Thr93, Arg104, and Asn114. His117 serves as the catalytic Pros-phosphohistidine intermediate.

It belongs to the NDK family. As to quaternary structure, homotetramer. It depends on Mg(2+) as a cofactor.

It localises to the cytoplasm. It catalyses the reaction a 2'-deoxyribonucleoside 5'-diphosphate + ATP = a 2'-deoxyribonucleoside 5'-triphosphate + ADP. It carries out the reaction a ribonucleoside 5'-diphosphate + ATP = a ribonucleoside 5'-triphosphate + ADP. Major role in the synthesis of nucleoside triphosphates other than ATP. The ATP gamma phosphate is transferred to the NDP beta phosphate via a ping-pong mechanism, using a phosphorylated active-site intermediate. The polypeptide is Nucleoside diphosphate kinase (Pseudomonas fluorescens (strain Pf0-1)).